The following is a 471-amino-acid chain: 5-hydroxytryptamine receptor 2A (471 aa).

Residues 1-80 lie on the Extracellular side of the membrane; the sequence is MDILCEENTS…LQEKNWSALL (80 aa). Residue N38 is glycosylated (N-linked (GlcNAc...) asparagine). Residues 81–97 form a helical membrane-spanning segment; the sequence is TAVVIILTIAGNILVIM. Over 98–111 the chain is Cytoplasmic; it reads AVSLEKKLQNATNY. A helical membrane pass occupies residues 112–137; it reads FLMSLAIADMLLGFLVMPVSMLTILY. Residues 138–146 lie on the Extracellular side of the membrane; the sequence is GYRWPLPSK. The chain crosses the membrane as a helical span at residues 147–171; sequence LCAVWIYLDVLFSTASIMHLCAISL. A disulfide bridge links C148 with C227. D155 serves as a coordination point for serotonin. Positions 172–174 match the DRY motif; important for ligand-induced conformation changes motif; that stretch reads DRY. Residues 172–191 lie on the Cytoplasmic side of the membrane; it reads DRYVAIQNPIHHSRFNSRTK. A helical membrane pass occupies residues 192-215; the sequence is AFLKIIAVWTISVGISMPIPVFGL. Residues 216–232 lie on the Extracellular side of the membrane; the sequence is QDDSKVFKEGSCLLADD. A helical membrane pass occupies residues 233 to 258; it reads NFVLIGSFVSFFIPLTIMVITYFLTI. Over 259–322 the chain is Cytoplasmic; sequence KSLQKEATLC…QSISNEQKAC (64 aa). The residue at position 280 (S280) is a Phosphoserine. Residues 323–348 form a helical membrane-spanning segment; the sequence is KVLGIVFSLFVVMWCPFFITNIMAVI. Residue N343 coordinates serotonin. C349 and C353 are disulfide-bonded. The Extracellular segment spans residues 349–356; that stretch reads CKESCNED. A helical membrane pass occupies residues 357 to 382; the sequence is VIGALLNVFVWIGYLSSAVNPLVYTL. Positions 376–380 match the NPxxY motif; important for ligand-induced conformation changes and signaling motif; that stretch reads NPLVY. The Cytoplasmic portion of the chain corresponds to 383 to 471; it reads FNKTYRSAFS…DGVNEKVSCV (89 aa). The segment at 450 to 471 is disordered; it reads KQHSEDASKDNSDGVNEKVSCV. Basic and acidic residues predominate over residues 451–465; it reads QHSEDASKDNSDGVN. The short motif at 469 to 471 is the PDZ-binding element; that stretch reads SCV.

Belongs to the G-protein coupled receptor 1 family. In terms of assembly, interacts (via C-terminus) with MPDZ and PATJ. May interact (via C-terminus) with MPP3, PRDX6, DLG4, DLG1, CASK, APBA1 and MAGI2. Interacts with GRM2 and DRD2; this may affect signaling.

The protein localises to the cell membrane. It is found in the cell projection. The protein resides in the dendrite. Its subcellular location is the axon. It localises to the cytoplasmic vesicle. The protein localises to the membrane. It is found in the caveola. The protein resides in the presynapse. With respect to regulation, G-protein coupled receptor activity is regulated by lipids: oleamide increases HTR2A-mediated activity. In terms of biological role, G-protein coupled receptor for 5-hydroxytryptamine (serotonin). Also functions as a receptor for various drugs and psychoactive substances, including mescaline, psilocybin, 1-(2,5-dimethoxy-4-iodophenyl)-2-aminopropane (DOI) and lysergic acid diethylamide (LSD). Ligand binding causes a conformation change that triggers signaling via guanine nucleotide-binding proteins (G proteins) and modulates the activity of downstream effectors. HTR2A is coupled to G(q)/G(11) G alpha proteins and activates phospholipase C-beta, releasing diacylglycerol (DAG) and inositol 1,4,5-trisphosphate (IP3) second messengers that modulate the activity of phosphatidylinositol 3-kinase and promote the release of Ca(2+) ions from intracellular stores, respectively. Beta-arrestin family members inhibit signaling via G proteins and mediate activation of alternative signaling pathways. Affects neural activity, perception, cognition and mood. Plays a role in the regulation of behavior, including responses to anxiogenic situations and psychoactive substances. Plays a role in intestinal smooth muscle contraction, and may play a role in arterial vasoconstriction. The protein is 5-hydroxytryptamine receptor 2A (HTR2A) of Pongo pygmaeus (Bornean orangutan).